The primary structure comprises 220 residues: LHFPL tetraspan subfamily member 1 protein (220 aa).

Positions 1–20 (MRSSLTMVGTLWAFLSLVTA) are cleaved as a signal peptide. 2 consecutive transmembrane segments (helical) span residues 86–106 (VVTG…VLGC) and 122–142 (AAQF…PLGW). A glycan (N-linked (GlcNAc...) asparagine) is linked at Asn-153. The chain crosses the membrane as a helical span at residues 165 to 185 (LGWAYYCAGGGAAAAMLICTW).

Belongs to the LHFP family. As to expression, widely expressed. Expressed at high levels in lung, thymus, skeletal muscle, colon and ovary.

It localises to the membrane. The sequence is that of LHFPL tetraspan subfamily member 1 protein from Homo sapiens (Human).